Here is a 130-residue protein sequence, read N- to C-terminus: uncharacterized protein (130 aa).

The interval 76-102 (RKCKNGPSPNKRGSASGCSRRGGGRGS) is disordered.

This is an uncharacterized protein from Saccharomyces cerevisiae (strain ATCC 204508 / S288c) (Baker's yeast).